Reading from the N-terminus, the 101-residue chain is Replication restart protein PriB (101 aa).

The SSB domain maps to 1–101 (MTTNNLVLSG…IHAENVELKT (101 aa)).

The protein belongs to the PriB family. As to quaternary structure, homodimer. Interacts with PriA and DnaT. Component of the replication restart primosome. Primosome assembly occurs via a 'hand-off' mechanism. PriA binds to replication forks, subsequently PriB then DnaT bind; DnaT then displaces ssDNA to generate the helicase loading substrate.

Functionally, involved in the restart of stalled replication forks, which reloads the replicative helicase on sites other than the origin of replication; the PriA-PriB pathway is the major replication restart pathway. During primosome assembly it facilitates complex formation between PriA and DnaT on DNA; stabilizes PriA on DNA. Stimulates the DNA unwinding activity of PriA helicase. The sequence is that of Replication restart protein PriB from Shewanella baltica (strain OS223).